A 209-amino-acid polypeptide reads, in one-letter code: Protein-L-isoaspartate O-methyltransferase (209 aa).

Residue serine 55 is part of the active site.

It belongs to the methyltransferase superfamily. L-isoaspartyl/D-aspartyl protein methyltransferase family.

Its subcellular location is the cytoplasm. It carries out the reaction [protein]-L-isoaspartate + S-adenosyl-L-methionine = [protein]-L-isoaspartate alpha-methyl ester + S-adenosyl-L-homocysteine. Functionally, catalyzes the methyl esterification of L-isoaspartyl residues in peptides and proteins that result from spontaneous decomposition of normal L-aspartyl and L-asparaginyl residues. It plays a role in the repair and/or degradation of damaged proteins. This is Protein-L-isoaspartate O-methyltransferase from Anaeromyxobacter dehalogenans (strain 2CP-1 / ATCC BAA-258).